A 278-amino-acid chain; its full sequence is Large ribosomal subunit protein uL2 (278 aa).

The tract at residues 212-278 (NRHRGIRPQT…IISRKKHKKG (67 aa)) is disordered. The segment covering 257–278 (YKTRKKKASDKLIISRKKHKKG) has biased composition (basic residues).

This sequence belongs to the universal ribosomal protein uL2 family. As to quaternary structure, part of the 50S ribosomal subunit. Forms a bridge to the 30S subunit in the 70S ribosome.

Its function is as follows. One of the primary rRNA binding proteins. Required for association of the 30S and 50S subunits to form the 70S ribosome, for tRNA binding and peptide bond formation. It has been suggested to have peptidyltransferase activity; this is somewhat controversial. Makes several contacts with the 16S rRNA in the 70S ribosome. The sequence is that of Large ribosomal subunit protein uL2 from Helicobacter pylori (strain Shi470).